A 499-amino-acid polypeptide reads, in one-letter code: Glycerol kinase (499 aa).

Position 13 (Thr13) interacts with ADP. Residues Thr13, Thr14, and Ser15 each contribute to the ATP site. Thr13 contributes to the sn-glycerol 3-phosphate binding site. Position 17 (Arg17) interacts with ADP. Arg83, Glu84, Tyr135, and Asp244 together coordinate sn-glycerol 3-phosphate. Glycerol-binding residues include Arg83, Glu84, Tyr135, Asp244, and Gln245. The ADP site is built by Thr266 and Gly310. Thr266, Gly310, Gln314, and Gly411 together coordinate ATP. ADP is bound by residues Gly411 and Asn415.

This sequence belongs to the FGGY kinase family.

The enzyme catalyses glycerol + ATP = sn-glycerol 3-phosphate + ADP + H(+). It participates in polyol metabolism; glycerol degradation via glycerol kinase pathway; sn-glycerol 3-phosphate from glycerol: step 1/1. With respect to regulation, inhibited by fructose 1,6-bisphosphate (FBP). In terms of biological role, key enzyme in the regulation of glycerol uptake and metabolism. Catalyzes the phosphorylation of glycerol to yield sn-glycerol 3-phosphate. This chain is Glycerol kinase, found in Pseudothermotoga lettingae (strain ATCC BAA-301 / DSM 14385 / NBRC 107922 / TMO) (Thermotoga lettingae).